A 1078-amino-acid polypeptide reads, in one-letter code: DNA-directed RNA polymerase subunit beta (1078 aa).

The protein belongs to the RNA polymerase beta chain family. As to quaternary structure, the minimal PEP RNA polymerase found in etioplasts (PEP-B) is composed of four subunits: alpha, beta, beta', and beta''. Following differentiation into chloroplasts the PEP-A RNA polymerase in this organism has been shown to be composed of at least 13 subunits, including the PEP-B subunits. When a (nuclear-encoded) sigma factor is associated with the core the holoenzyme is formed, which can initiate transcription.

The protein localises to the plastid. The protein resides in the chloroplast. The catalysed reaction is RNA(n) + a ribonucleoside 5'-triphosphate = RNA(n+1) + diphosphate. In terms of biological role, DNA-dependent RNA polymerase catalyzes the transcription of DNA into RNA using the four ribonucleoside triphosphates as substrates. This Sinapis alba (White mustard) protein is DNA-directed RNA polymerase subunit beta (rpoB).